We begin with the raw amino-acid sequence, 577 residues long: Phosphoenolpyruvate-protein phosphotransferase (577 aa).

His191 serves as the catalytic Tele-phosphohistidine intermediate. Arg298 and Arg334 together coordinate phosphoenolpyruvate. Residues Glu435 and Asp459 each coordinate Mg(2+). Phosphoenolpyruvate contacts are provided by residues 458-459 and Arg469; that span reads ND. Residue Cys506 is the Proton donor of the active site.

Belongs to the PEP-utilizing enzyme family. Homodimer. It depends on Mg(2+) as a cofactor.

Its subcellular location is the cytoplasm. It carries out the reaction L-histidyl-[protein] + phosphoenolpyruvate = N(pros)-phospho-L-histidyl-[protein] + pyruvate. Functionally, general (non sugar-specific) component of the phosphoenolpyruvate-dependent sugar phosphotransferase system (sugar PTS). This major carbohydrate active-transport system catalyzes the phosphorylation of incoming sugar substrates concomitantly with their translocation across the cell membrane. Enzyme I transfers the phosphoryl group from phosphoenolpyruvate (PEP) to the phosphoryl carrier protein (HPr). The polypeptide is Phosphoenolpyruvate-protein phosphotransferase (ptsI) (Streptococcus equinus (Streptococcus bovis)).